Reading from the N-terminus, the 730-residue chain is Pentatricopeptide repeat-containing protein At5g64320, mitochondrial (730 aa).

The N-terminal 18 residues, 1 to 18, are a transit peptide targeting the mitochondrion; the sequence is MVMLARSKLALDVSRRSQ. 17 PPR repeats span residues 110-144, 145-175, 181-215, 216-250, 251-285, 286-320, 321-351, 352-387, 388-422, 423-457, 458-492, 493-527, 528-562, 563-597, 598-632, 633-667, and 668-702; these read SFDVYQVLIGKLGANGEFKTIDRLLIQMKDEGIVF, KESLFISIMRDYDKAGFPGQTTRLMLEMRNV, TFKSYNVVLEILVSGNCHKVAANVFYDMLSRKIPP, TLFTFGVVMKAFCAVNEIDSALSLLRDMTKHGCVP, NSVIYQTLIHSLSKCNRVNEALQLLEEMFLMGCVP, DAETFNDVILGLCKFDRINEAAKMVNRMLIRGFAP, DDITYGYLMNGLCKIGRVDAAKDLFYRIPKP, EIVIFNTLIHGFVTHGRLDDAKAVLSDMVTSYGIVP, DVCTYNSLIYGYWKEGLVGLALEVLHDMRNKGCKP, NVYSYTILVDGFCKLGKIDEAYNVLNEMSADGLKP, NTVGFNCLISAFCKEHRIPEAVEIFREMPRKGCKP, DVYTFNSLISGLCEVDEIKHALWLLRDMISEGVVA, NTVTYNTLINAFLRRGEIKEARKLVNEMVFQGSPL, DEITYNSLIKGLCRAGEVDKARSLFEKMLRDGHAP, SNISCNILINGLCRSGMVEEAVEFQKEMVLRGSTP, DIVTFNSLINGLCRAGRIEDGLTMFRKLQAEGIPP, and DTVTFNTLMSWLCKGGFVYDACLLLDEGIEDGFVP.

It belongs to the PPR family. P subfamily.

Its subcellular location is the mitochondrion. This Arabidopsis thaliana (Mouse-ear cress) protein is Pentatricopeptide repeat-containing protein At5g64320, mitochondrial.